The following is a 500-amino-acid chain: Cysteine-rich secretory protein LCCL domain-containing 1 (500 aa).

An N-terminal signal peptide occupies residues 1-23 (MMCKAQEWLRVTALLFVARAVPA). The SCP domain maps to 66-206 (LDLHNKLRSQ…PKAVYLVCNY (141 aa)). The interval 258–281 (EIERQQSQVHDTHVRTRSDDSDRN) is disordered. 2 consecutive LCCL domains span residues 289–384 (MSQI…ANSF) and 390–492 (TVQA…TGGK). Disulfide bonds link C295–C313, C317–C337, C396–C418, and C422–C445.

This sequence belongs to the CRISP family.

Its subcellular location is the secreted. The chain is Cysteine-rich secretory protein LCCL domain-containing 1 (Crispld1) from Mus musculus (Mouse).